The primary structure comprises 178 residues: PRA1 family protein 2 (178 aa).

Over 1–41 the chain is Cytoplasmic; that stretch reads MSEVRLPPLRALDDFVLGSARLAAPDPGDPQRWCHRVINNL. A helical membrane pass occupies residues 42 to 62; sequence LYYQTNYLLCFGISLALAGYI. Topologically, residues 63-64 are extracellular; it reads RP. Residues 65 to 85 form a helical membrane-spanning segment; it reads LHTLLSALVVVVALGVLVWAA. At 86 to 96 the chain is on the cytoplasmic side; that stretch reads ETRAAVRRCRR. The helical transmembrane segment at 97 to 119 threads the bilayer; that stretch reads SHPAACLAAVLAISLFILWAVGG. The Extracellular segment spans residues 120-122; it reads AFT. A helical transmembrane segment spans residues 123 to 140; that stretch reads FLLSITAPVFLILLHASL. At 141–178 the chain is on the cytoplasmic side; the sequence is RLRNLKNKIENKIESIGLKRTPMGLLLEALGQEQEAGS.

The protein belongs to the PRA1 family. In terms of assembly, interacts with CCR5 and GDE1.

It localises to the endosome membrane. Functionally, may be involved in ER/Golgi transport and vesicular traffic. Plays a proapoptotic role in cerulenin-induced neuroblastoma apoptosis. The chain is PRA1 family protein 2 (Praf2) from Mus musculus (Mouse).